A 468-amino-acid polypeptide reads, in one-letter code: Putative ankyrin repeat protein R873 (468 aa).

14 ANK repeats span residues 38 to 68 (IKTDIIEYIVDNNLLDVLKYFVVLKNLKHNL), 78 to 107 (SLNENLVKNCEKGNIEIIKYLLDIGADIEG), 109 to 137 (DNCAVLTASHHGHIEVVKYLVCKGANFRA), 138 to 167 (NNDKAVRWASDKGHLDVVKYLVSQGSDIRS), 169 to 197 (NDCSICWASGNGHLEMVKYLVSQGVNIRT), 198 to 227 (NDDWAIRLASENGHLEVVKYLVSQGADIRS), 229 to 257 (DDHAIKWASGNGHLEMVKYLVSQSSNIIA), 258 to 287 (EDNYAVRWASENGHLEVIKYLVSQGSNITS), 289 to 316 (YYTIIAASKNGHIDIVKYLVSQGVNIRD), 317 to 346 (CDSSAVQIASENGHLEVVKYLVSQGIDFRE), 348 to 376 (DDLTFDMALRKGHVEIVKYLVGQGVDFRV), 378 to 406 (DDYPVRMASHCGRLGVVKYFVSQGADVRA), 407 to 436 (EDDYAVRMSAEKGHIEVVKFLVDNGANIRA), and 438 to 466 (NDYAVRLASENGHIKIVEYLVSMGAVLNK).

The sequence is that of Putative ankyrin repeat protein R873 from Acanthamoeba polyphaga mimivirus (APMV).